Reading from the N-terminus, the 668-residue chain is BTB/POZ domain-containing protein At5g66560 (668 aa).

Residues 21–133 (SDIEIEVDDM…CYGVKMDLSA (113 aa)) enclose the BTB domain. Basic and acidic residues predominate over residues 73-84 (ETDKKGKGHEIE). Residues 73–98 (ETDKKGKGHEIEDDKEEEEVEEQEIE) are disordered. Residues 85 to 98 (DDKEEEEVEEQEIE) are compositionally biased toward acidic residues. One can recognise an NPH3 domain in the interval 254 to 530 (ELWFEDLTQL…VQVLFFEQLQ (277 aa)). Y471 is subject to Phosphotyrosine.

Belongs to the NPH3 family.

It functions in the pathway protein modification; protein ubiquitination. May act as a substrate-specific adapter of an E3 ubiquitin-protein ligase complex (CUL3-RBX1-BTB) which mediates the ubiquitination and subsequent proteasomal degradation of target proteins. The chain is BTB/POZ domain-containing protein At5g66560 from Arabidopsis thaliana (Mouse-ear cress).